Here is a 568-residue protein sequence, read N- to C-terminus: MHAQDKGGILPALSLLLIAVAMVSPSQAAYKLQERYSWNQLDFAFPNARLKEQALASGDYIPTNALPVGVEHFGNRLFVTVPRWRDGIPATLTYINMDHSVTGSPELIPYPDWRANTAGDCANSITTAYRIKVDECGRLWVLDTGTVGIGNTTTNPCPYAINIFDLTTNTRIRRYELPAADTNPNTFIANIAVDIGKNCDDAFAYFADELGYGLISYSWELNKSWRFSAHSYFFPDPLRGDFNVAGINFQWGEEGIFGMSLTPIRSDGYRTLYFSPLASHRQFAVSTRILRDETRTEDSYHDFVALDERGPNAHTTSRVMSDDGVELFNLIDQNAVGCWHSSMPYSPQSHGIVDRDDVGLVFPADVKIDENKNVWVLSDRMPVFLLSDLDYSDTNFRIYTAPLATLIENTVCDLRNNAYGPPNTVSIPKQAAPGHSAVGPPLYTTTNQYRSLLSQKPQTSWGPSLPSRNYLPALNGNPGIPGSRNNLNNLGAPGQVVSSVSVSTNTVGPSGIEVPKAYVFNQHNGLNYETSGPHLFPTLQPAPSQLGGGLKTYVNARQSGWWLHQQQG.

Residues 1 to 28 (MHAQDKGGILPALSLLLIAVAMVSPSQA) form the signal peptide. 2 N-linked (GlcNAc...) asparagine glycosylation sites follow: N151 and N222.

Belongs to the major royal jelly protein family.

The protein resides in the secreted. In terms of biological role, controls the pigmentation pattern of the adult cuticle and larval mouth parts. In Drosophila madeirensis (Fruit fly), this protein is Protein yellow (y).